Consider the following 404-residue polypeptide: 4-hydroxy-3-methylbut-2-enyl diphosphate reductase (404 aa).

Position 66 (C66) interacts with [4Fe-4S] cluster. (2E)-4-hydroxy-3-methylbut-2-enyl diphosphate is bound at residue H96. Residue H96 participates in dimethylallyl diphosphate binding. H96 lines the isopentenyl diphosphate pocket. Residue C157 participates in [4Fe-4S] cluster binding. Position 185 (H185) interacts with (2E)-4-hydroxy-3-methylbut-2-enyl diphosphate. H185 is a dimethylallyl diphosphate binding site. H185 lines the isopentenyl diphosphate pocket. The active-site Proton donor is the E187. T250 provides a ligand contact to (2E)-4-hydroxy-3-methylbut-2-enyl diphosphate. C288 is a binding site for [4Fe-4S] cluster. S317, S318, N319, and S380 together coordinate (2E)-4-hydroxy-3-methylbut-2-enyl diphosphate. Positions 317, 318, 319, and 380 each coordinate dimethylallyl diphosphate. Isopentenyl diphosphate contacts are provided by S317, S318, N319, and S380.

This sequence belongs to the IspH family. The cofactor is [4Fe-4S] cluster.

It carries out the reaction isopentenyl diphosphate + 2 oxidized [2Fe-2S]-[ferredoxin] + H2O = (2E)-4-hydroxy-3-methylbut-2-enyl diphosphate + 2 reduced [2Fe-2S]-[ferredoxin] + 2 H(+). The catalysed reaction is dimethylallyl diphosphate + 2 oxidized [2Fe-2S]-[ferredoxin] + H2O = (2E)-4-hydroxy-3-methylbut-2-enyl diphosphate + 2 reduced [2Fe-2S]-[ferredoxin] + 2 H(+). Its pathway is isoprenoid biosynthesis; dimethylallyl diphosphate biosynthesis; dimethylallyl diphosphate from (2E)-4-hydroxy-3-methylbutenyl diphosphate: step 1/1. It participates in isoprenoid biosynthesis; isopentenyl diphosphate biosynthesis via DXP pathway; isopentenyl diphosphate from 1-deoxy-D-xylulose 5-phosphate: step 6/6. Its function is as follows. Catalyzes the conversion of 1-hydroxy-2-methyl-2-(E)-butenyl 4-diphosphate (HMBPP) into a mixture of isopentenyl diphosphate (IPP) and dimethylallyl diphosphate (DMAPP). Acts in the terminal step of the DOXP/MEP pathway for isoprenoid precursor biosynthesis. This chain is 4-hydroxy-3-methylbut-2-enyl diphosphate reductase, found in Prochlorococcus marinus (strain MIT 9211).